The following is a 156-amino-acid chain: MNKYFLAGIISVVTLVLDQVTKIAVREKMVLWTSETVIPGFFNLVHVVNKGAAFGFLNRADITWQRNFFVVVTIIALGAIGMLLKSAEEKDKFQILGLGFVLGGAIGNLIDRILYHQVTDFLDFYYGSHHYPAFNVADIAICLGAFAMIVSFYKNK.

A run of 3 helical transmembrane segments spans residues 37 to 57 (VIPG…FGFL), 68 to 88 (FFVV…KSAE), and 95 to 115 (ILGL…RILY). Catalysis depends on residues aspartate 120 and aspartate 138. A helical transmembrane segment spans residues 133 to 153 (AFNVADIAICLGAFAMIVSFY).

Belongs to the peptidase A8 family.

The protein resides in the cell inner membrane. The enzyme catalyses Release of signal peptides from bacterial membrane prolipoproteins. Hydrolyzes -Xaa-Yaa-Zaa-|-(S,diacylglyceryl)Cys-, in which Xaa is hydrophobic (preferably Leu), and Yaa (Ala or Ser) and Zaa (Gly or Ala) have small, neutral side chains.. It functions in the pathway protein modification; lipoprotein biosynthesis (signal peptide cleavage). Functionally, this protein specifically catalyzes the removal of signal peptides from prolipoproteins. The protein is Lipoprotein signal peptidase of Maridesulfovibrio salexigens (strain ATCC 14822 / DSM 2638 / NCIMB 8403 / VKM B-1763) (Desulfovibrio salexigens).